The sequence spans 552 residues: Non-structural protein NS1 (552 aa).

The protein belongs to the orbivirus non-structural protein NS1 family.

This chain is Non-structural protein NS1 (Segment-5), found in Antilocapra americana (Pronghorn).